The primary structure comprises 310 residues: GPN-loop GTPase 2 (310 aa).

Alanine 2 is subject to N-acetylalanine. 19-24 (GSGKTT) serves as a coordination point for GTP. Positions 76 to 78 (GPN) match the Gly-Pro-Asn (GPN)-loop; involved in dimer interface motif. 178 to 181 (SKMD) is a binding site for GTP.

This sequence belongs to the GPN-loop GTPase family. Heterodimers with GPN1 or GPN3. Binds to RNA polymerase II (RNAPII).

Functionally, small GTPase required for proper localization of RNA polymerase II and III (RNAPII and RNAPIII). May act at an RNAP assembly step prior to nuclear import. This chain is GPN-loop GTPase 2, found in Homo sapiens (Human).